The primary structure comprises 357 residues: Cyclin-Y (357 aa).

Residues methionine 1 to serine 13 show a composition bias toward polar residues. The tract at residues methionine 1–aspartate 23 is disordered. Residues proline 186–isoleucine 284 form the Cyclin N-terminal domain.

This sequence belongs to the cyclin family. Interacts with pct-1; the interaction is required to activate pct-1.

It localises to the cytoplasm. The protein resides in the cell projection. Its subcellular location is the dendrite. It is found in the axon. In association with pct-1, regulates the trafficking of synaptic vesicle precursors in DA motor neurons by promoting anterograde trafficking to the axon and preventing dynein-dependent trafficking to the dendrite. May also regulate synaptic vesicle trafficking in DD motor neurons and in RIA interneurons. Involved in synapse formation during DD motor neuron remodeling by disassembling ventral presynaptic structures. May activate cdk-5. The protein is Cyclin-Y of Caenorhabditis elegans.